The following is a 607-amino-acid chain: ATP-dependent RNA helicase-like protein DB10 (607 aa).

Over residues 1–10 (MAVVTASSAG) the composition is skewed to polar residues. Disordered regions lie at residues 1-25 (MAVV…KPWK) and 66-108 (VFVS…DGTS). Residues 18–52 (PTLPKPWKGLVDGTTGFIYFWNPETNDTQYERPVP) form the WW domain. Positions 89–98 (RGSNNKIARS) are enriched in polar residues. Residues 99-108 (SSDRFHDGTS) are compositionally biased toward basic and acidic residues. The Q motif motif lies at 145–173 (TSFEATGFPSEIVREMHQAGFSAPTPIQA). The region spanning 176–350 (WPIALQGRDI…ADLLVNSVQV (175 aa)) is the Helicase ATP-binding domain. 189 to 196 (AKTGSGKT) contacts ATP. Positions 298–301 (DEAD) match the DEAD box motif. Positions 379-523 (RVEQILRSKE…CVPTELRDMA (145 aa)) constitute a Helicase C-terminal domain. Residues 519-607 (LRDMASRGGG…WSGKKSRFTD (89 aa)) are disordered. A compositionally biased stretch (gly residues) spans 538-548 (SGPGGRGGRGG). The segment covering 562-574 (GYDRGSRDSDRYG) has biased composition (basic and acidic residues).

The protein belongs to the DEAD box helicase family.

The catalysed reaction is ATP + H2O = ADP + phosphate + H(+). This is ATP-dependent RNA helicase-like protein DB10 from Nicotiana sylvestris (Wood tobacco).